A 413-amino-acid chain; its full sequence is Gamma-glutamyl phosphate reductase (413 aa).

The protein belongs to the gamma-glutamyl phosphate reductase family.

The protein resides in the cytoplasm. It catalyses the reaction L-glutamate 5-semialdehyde + phosphate + NADP(+) = L-glutamyl 5-phosphate + NADPH + H(+). It participates in amino-acid biosynthesis; L-proline biosynthesis; L-glutamate 5-semialdehyde from L-glutamate: step 2/2. Functionally, catalyzes the NADPH-dependent reduction of L-glutamate 5-phosphate into L-glutamate 5-semialdehyde and phosphate. The product spontaneously undergoes cyclization to form 1-pyrroline-5-carboxylate. The chain is Gamma-glutamyl phosphate reductase from Anoxybacillus flavithermus (strain DSM 21510 / WK1).